The chain runs to 193 residues: Ion-translocating oxidoreductase complex subunit B (193 aa).

The tract at residues Met-1–Ala-26 is hydrophobic. The 59-residue stretch at Glu-32–Val-90 folds into the 4Fe-4S domain. 12 residues coordinate [4Fe-4S] cluster: Cys-49, Cys-52, Cys-57, Cys-73, Cys-114, Cys-117, Cys-120, Cys-124, Cys-144, Cys-147, Cys-150, and Cys-154. 2 consecutive 4Fe-4S ferredoxin-type domains span residues Lys-105–Lys-134 and Met-136–Val-164.

It belongs to the 4Fe4S bacterial-type ferredoxin family. RnfB subfamily. In terms of assembly, the complex is composed of six subunits: RnfA, RnfB, RnfC, RnfD, RnfE and RnfG. It depends on [4Fe-4S] cluster as a cofactor.

It localises to the cell inner membrane. Part of a membrane-bound complex that couples electron transfer with translocation of ions across the membrane. The sequence is that of Ion-translocating oxidoreductase complex subunit B from Shewanella sp. (strain MR-7).